Reading from the N-terminus, the 99-residue chain is NADH-quinone oxidoreductase subunit K (99 aa).

Helical transmembrane passes span 2–22 (PVEY…LGVL), 28–48 (LILM…FLAF), and 60–80 (IAFF…AVVI).

It belongs to the complex I subunit 4L family. As to quaternary structure, NDH-1 is composed of 14 different subunits. Subunits NuoA, H, J, K, L, M, N constitute the membrane sector of the complex.

Its subcellular location is the cell inner membrane. The catalysed reaction is a quinone + NADH + 5 H(+)(in) = a quinol + NAD(+) + 4 H(+)(out). Functionally, NDH-1 shuttles electrons from NADH, via FMN and iron-sulfur (Fe-S) centers, to quinones in the respiratory chain. The immediate electron acceptor for the enzyme in this species is believed to be ubiquinone. Couples the redox reaction to proton translocation (for every two electrons transferred, four hydrogen ions are translocated across the cytoplasmic membrane), and thus conserves the redox energy in a proton gradient. The polypeptide is NADH-quinone oxidoreductase subunit K (Anaeromyxobacter dehalogenans (strain 2CP-C)).